The primary structure comprises 577 residues: Arginine--tRNA ligase (577 aa).

The 'HIGH' region signature appears at 122–132 (PNVAKEMHVGH).

It belongs to the class-I aminoacyl-tRNA synthetase family. In terms of assembly, monomer.

It is found in the cytoplasm. The enzyme catalyses tRNA(Arg) + L-arginine + ATP = L-arginyl-tRNA(Arg) + AMP + diphosphate. This chain is Arginine--tRNA ligase, found in Histophilus somni (strain 2336) (Haemophilus somnus).